The sequence spans 776 residues: Probable inorganic carbon transporter subunit DabA (776 aa).

Residues Cys313, Asp315, His473, and Cys488 each coordinate Zn(2+).

The protein belongs to the inorganic carbon transporter (TC 9.A.2) DabA family. As to quaternary structure, forms a complex with DabB. The cofactor is Zn(2+).

The protein localises to the cell inner membrane. Functionally, part of an energy-coupled inorganic carbon pump. This is Probable inorganic carbon transporter subunit DabA from Chromobacterium violaceum (strain ATCC 12472 / DSM 30191 / JCM 1249 / CCUG 213 / NBRC 12614 / NCIMB 9131 / NCTC 9757 / MK).